A 111-amino-acid chain; its full sequence is MKKSNNKNNHKNNHNNNQGGENIRVRSPRRGEIPGVVEQILGHGKLKVRCNDKQIRLCRIPGKMKKRIWIREGDVVLVKPWDFQSDEKADVIWRYTRTEANYLERRGFLKI.

Positions 1–13 are enriched in basic residues; the sequence is MKKSNNKNNHKNN. Residues 1 to 30 form a disordered region; that stretch reads MKKSNNKNNHKNNHNNNQGGENIRVRSPRR. The region spanning 23-96 is the S1-like domain; sequence IRVRSPRRGE…EKADVIWRYT (74 aa).

Belongs to the eIF-1A family.

Its function is as follows. Seems to be required for maximal rate of protein biosynthesis. Enhances ribosome dissociation into subunits and stabilizes the binding of the initiator Met-tRNA(I) to 40 S ribosomal subunits. The polypeptide is Translation initiation factor 1A (Methanosphaera stadtmanae (strain ATCC 43021 / DSM 3091 / JCM 11832 / MCB-3)).